The following is a 427-amino-acid chain: Glutamate-1-semialdehyde 2,1-aminomutase (427 aa).

K265 bears the N6-(pyridoxal phosphate)lysine mark.

It belongs to the class-III pyridoxal-phosphate-dependent aminotransferase family. HemL subfamily. Homodimer. Pyridoxal 5'-phosphate serves as cofactor.

The protein resides in the cytoplasm. It carries out the reaction (S)-4-amino-5-oxopentanoate = 5-aminolevulinate. The protein operates within porphyrin-containing compound metabolism; protoporphyrin-IX biosynthesis; 5-aminolevulinate from L-glutamyl-tRNA(Glu): step 2/2. This Burkholderia cenocepacia (strain ATCC BAA-245 / DSM 16553 / LMG 16656 / NCTC 13227 / J2315 / CF5610) (Burkholderia cepacia (strain J2315)) protein is Glutamate-1-semialdehyde 2,1-aminomutase.